Here is a 412-residue protein sequence, read N- to C-terminus: Multifunctional CCA protein (412 aa).

ATP-binding residues include Gly8 and Arg11. Residues Gly8 and Arg11 each coordinate CTP. Mg(2+)-binding residues include Glu21 and Asp23. Arg92, Arg138, and Arg141 together coordinate ATP. CTP contacts are provided by Arg92, Arg138, and Arg141. Residues Thr227–Trp328 form the HD domain.

It belongs to the tRNA nucleotidyltransferase/poly(A) polymerase family. Bacterial CCA-adding enzyme type 1 subfamily. Monomer. Can also form homodimers and oligomers. Mg(2+) is required as a cofactor. It depends on Ni(2+) as a cofactor.

It carries out the reaction a tRNA precursor + 2 CTP + ATP = a tRNA with a 3' CCA end + 3 diphosphate. The enzyme catalyses a tRNA with a 3' CCA end + 2 CTP + ATP = a tRNA with a 3' CCACCA end + 3 diphosphate. Its function is as follows. Catalyzes the addition and repair of the essential 3'-terminal CCA sequence in tRNAs without using a nucleic acid template. Adds these three nucleotides in the order of C, C, and A to the tRNA nucleotide-73, using CTP and ATP as substrates and producing inorganic pyrophosphate. tRNA 3'-terminal CCA addition is required both for tRNA processing and repair. Also involved in tRNA surveillance by mediating tandem CCA addition to generate a CCACCA at the 3' terminus of unstable tRNAs. While stable tRNAs receive only 3'-terminal CCA, unstable tRNAs are marked with CCACCA and rapidly degraded. In Baumannia cicadellinicola subsp. Homalodisca coagulata, this protein is Multifunctional CCA protein.